The primary structure comprises 150 residues: Large ribosomal subunit protein bL9 (150 aa).

It belongs to the bacterial ribosomal protein bL9 family.

Binds to the 23S rRNA. The sequence is that of Large ribosomal subunit protein bL9 from Paraburkholderia phymatum (strain DSM 17167 / CIP 108236 / LMG 21445 / STM815) (Burkholderia phymatum).